A 269-amino-acid chain; its full sequence is dITP/XTP pyrophosphatase (269 aa).

Substrate is bound at residue 22 to 27 (SNNAHK). The active-site Proton acceptor is aspartate 82. Position 82 (aspartate 82) interacts with Mg(2+). Substrate-binding positions include serine 83, 165–168 (FGYD), lysine 188, and 193–194 (HR).

Belongs to the HAM1 NTPase family. Homodimer. Mg(2+) is required as a cofactor.

It catalyses the reaction XTP + H2O = XMP + diphosphate + H(+). The catalysed reaction is dITP + H2O = dIMP + diphosphate + H(+). It carries out the reaction ITP + H2O = IMP + diphosphate + H(+). Functionally, pyrophosphatase that catalyzes the hydrolysis of nucleoside triphosphates to their monophosphate derivatives, with a high preference for the non-canonical purine nucleotides XTP (xanthosine triphosphate), dITP (deoxyinosine triphosphate) and ITP. Seems to function as a house-cleaning enzyme that removes non-canonical purine nucleotides from the nucleotide pool, thus preventing their incorporation into DNA/RNA and avoiding chromosomal lesions. The sequence is that of dITP/XTP pyrophosphatase from Treponema pallidum (strain Nichols).